Here is a 159-residue protein sequence, read N- to C-terminus: Phosphopantetheine adenylyltransferase (159 aa).

Threonine 9 provides a ligand contact to substrate. ATP contacts are provided by residues 9-10 and histidine 17; that span reads TF. Positions 41, 73, and 87 each coordinate substrate. ATP contacts are provided by residues 88 to 90, glutamate 98, and 123 to 129; these read GLR and YSFISST.

It belongs to the bacterial CoaD family. In terms of assembly, homohexamer. The cofactor is Mg(2+).

It localises to the cytoplasm. The enzyme catalyses (R)-4'-phosphopantetheine + ATP + H(+) = 3'-dephospho-CoA + diphosphate. Its pathway is cofactor biosynthesis; coenzyme A biosynthesis; CoA from (R)-pantothenate: step 4/5. Reversibly transfers an adenylyl group from ATP to 4'-phosphopantetheine, yielding dephospho-CoA (dPCoA) and pyrophosphate. The chain is Phosphopantetheine adenylyltransferase from Pseudomonas putida (strain GB-1).